Here is a 397-residue protein sequence, read N- to C-terminus: Lysophospholipid transporter LplT (397 aa).

The Periplasmic portion of the chain corresponds to 1 to 17 (MSESVHTNTSLWSKGMK). The helical transmembrane segment at 18 to 38 (AVIVAQFLSAFGDNALLFATL) threads the bilayer. Topologically, residues 39 to 52 (ALLKAQFYPEWSQP) are cytoplasmic. The helical transmembrane segment at 53–73 (ILQMVFVGAYILFAPFVGQVA) threads the bilayer. Residues 74 to 90 (DSFAKGRVMMFANGLKL) lie on the Periplasmic side of the membrane. Residues 91-111 (LGAASICFGINPFLGYTLVGV) traverse the membrane as a helical segment. At 112 to 144 (GAAAYSPAKYGILGELTTGSKLVKANGLMEAST) the chain is on the cytoplasmic side. The chain crosses the membrane as a helical span at residues 145-165 (IAAILLGSVAGGVLADWHVLV). Ala-166 is a topological domain (periplasmic). A helical transmembrane segment spans residues 167–187 (LAACALAYGGAVVANIYIPKL). The Cytoplasmic segment spans residues 188–226 (AAARPGQSWNLINMTRSFLNACTSLWRNGETRFSLVGTS). The helical transmembrane segment at 227–247 (LFWGAGVTLRFLLVLWVPVAL) threads the bilayer. At 248–256 (GITDNATPT) the chain is on the periplasmic side. A helical membrane pass occupies residues 257–277 (YLNAMVAIGIVVGAGAAAKLV). Residues 278 to 280 (TLE) are Cytoplasmic-facing. Residues 281–301 (TVSRCMPAGILIGVVVLIFSL) form a helical membrane-spanning segment. The Periplasmic portion of the chain corresponds to 302–304 (QHE). A helical transmembrane segment spans residues 305 to 325 (LLPAYALLMLIGVMGGFFVVP). Over 326-343 (LNALLQERGKKSVGAGNA) the chain is Cytoplasmic. Residues 344–364 (IAVQNLGENSAMLLMLGIYSL) traverse the membrane as a helical segment. Residues 365 to 366 (AV) lie on the Periplasmic side of the membrane. A helical membrane pass occupies residues 367–387 (MVGIPVVPIGIGFGALFALAI). The Cytoplasmic segment spans residues 388–397 (TALWIWQRRH).

This sequence belongs to the major facilitator superfamily. LplT (TC 2.A.1.42) family.

It is found in the cell inner membrane. Catalyzes the facilitated diffusion of 2-acyl-glycero-3-phosphoethanolamine (2-acyl-GPE) into the cell. In Escherichia coli (strain ATCC 8739 / DSM 1576 / NBRC 3972 / NCIMB 8545 / WDCM 00012 / Crooks), this protein is Lysophospholipid transporter LplT.